The primary structure comprises 404 residues: Protein L-Myc-1b (404 aa).

Disordered stretches follow at residues 175–195 (KKQVSSGSESRTDSSDDEEID) and 238–331 (QQHN…FLER). The span at 287–315 (VPAQSPTVSASPTHTSYHLKSQPSSPQSS) shows a compositional bias: polar residues. Residues 321–373 (DKRKTHNFLERKRRNDLRSRFLALRDEIPGLVDCPKTPKVVILTKATEYLRTL) form the bHLH domain. The segment at 373 to 401 (LHVSDRQKAQEKKQLKSKQQQLLRRLAEL) is leucine-zipper.

As to quaternary structure, efficient DNA binding requires dimerization with another bHLH protein. Binds DNA as a heterodimer with max.

It is found in the nucleus. The polypeptide is Protein L-Myc-1b (Danio rerio (Zebrafish)).